The sequence spans 147 residues: SsrA-binding protein (147 aa).

The protein belongs to the SmpB family.

The protein resides in the cytoplasm. Functionally, required for rescue of stalled ribosomes mediated by trans-translation. Binds to transfer-messenger RNA (tmRNA), required for stable association of tmRNA with ribosomes. tmRNA and SmpB together mimic tRNA shape, replacing the anticodon stem-loop with SmpB. tmRNA is encoded by the ssrA gene; the 2 termini fold to resemble tRNA(Ala) and it encodes a 'tag peptide', a short internal open reading frame. During trans-translation Ala-aminoacylated tmRNA acts like a tRNA, entering the A-site of stalled ribosomes, displacing the stalled mRNA. The ribosome then switches to translate the ORF on the tmRNA; the nascent peptide is terminated with the 'tag peptide' encoded by the tmRNA and targeted for degradation. The ribosome is freed to recommence translation, which seems to be the essential function of trans-translation. This chain is SsrA-binding protein, found in Mycoplasmopsis agalactiae (strain NCTC 10123 / CIP 59.7 / PG2) (Mycoplasma agalactiae).